A 123-amino-acid polypeptide reads, in one-letter code: Cytochrome b-c1 complex subunit 7 (123 aa).

This sequence belongs to the UQCRB/QCR7 family. Component of the ubiquinol-cytochrome c oxidoreductase (cytochrome b-c1 complex, complex III, CIII), a multisubunit enzyme composed of 3 respiratory subunits cytochrome b, cytochrome c1 and Rieske protein, 2 core protein subunits, and additional low-molecular weight protein subunits. The complex exists as an obligatory dimer and forms supercomplexes (SCs) in the inner mitochondrial membrane with cytochrome c oxidase (complex IV, CIV). Post-translationally, the N-terminus is blocked.

It is found in the mitochondrion inner membrane. Component of the ubiquinol-cytochrome c oxidoreductase, a multisubunit transmembrane complex that is part of the mitochondrial electron transport chain which drives oxidative phosphorylation. The respiratory chain contains 3 multisubunit complexes succinate dehydrogenase (complex II, CII), ubiquinol-cytochrome c oxidoreductase (cytochrome b-c1 complex, complex III, CIII) and cytochrome c oxidase (complex IV, CIV), that cooperate to transfer electrons derived from NADH and succinate to molecular oxygen, creating an electrochemical gradient over the inner membrane that drives transmembrane transport and the ATP synthase. The cytochrome b-c1 complex catalyzes electron transfer from ubiquinol to cytochrome c, linking this redox reaction to translocation of protons across the mitochondrial inner membrane, with protons being carried across the membrane as hydrogens on the quinol. In the process called Q cycle, 2 protons are consumed from the matrix, 4 protons are released into the intermembrane space and 2 electrons are passed to cytochrome c. The protein is Cytochrome b-c1 complex subunit 7 of Solanum tuberosum (Potato).